Here is a 369-residue protein sequence, read N- to C-terminus: S-(hydroxymethyl)glutathione dehydrogenase (369 aa).

Zn(2+)-binding residues include Cys-40, His-62, Cys-92, Cys-95, Cys-98, Cys-106, and Cys-169.

It belongs to the zinc-containing alcohol dehydrogenase family. Class-III subfamily. As to quaternary structure, homodimer. The cofactor is Zn(2+).

Its subcellular location is the cytoplasm. It catalyses the reaction S-(hydroxymethyl)glutathione + NADP(+) = S-formylglutathione + NADPH + H(+). It carries out the reaction S-(hydroxymethyl)glutathione + NAD(+) = S-formylglutathione + NADH + H(+). The enzyme catalyses a primary alcohol + NAD(+) = an aldehyde + NADH + H(+). The catalysed reaction is a secondary alcohol + NAD(+) = a ketone + NADH + H(+). It catalyses the reaction S-nitrosoglutathione + NADH + H(+) = S-(hydroxysulfenamide)glutathione + NAD(+). In terms of biological role, has high formaldehyde dehydrogenase activity in the presence of glutathione and catalyzes the oxidation of normal alcohols in a reaction that is not GSH-dependent. In addition, hemithiolacetals other than those formed from GSH, including omega-thiol fatty acids, also are substrates. Also acts as a S-nitroso-glutathione reductase by catalyzing the NADH-dependent reduction of S-nitrosoglutathione. The sequence is that of S-(hydroxymethyl)glutathione dehydrogenase (frmA) from Synechocystis sp. (strain ATCC 27184 / PCC 6803 / Kazusa).